A 342-amino-acid polypeptide reads, in one-letter code: Succinoglycan biosynthesis protein ExoU (342 aa).

The protein belongs to the glycosyltransferase 2 family.

The protein resides in the cytoplasm. The protein operates within glycan metabolism; exopolysaccharide biosynthesis. Functionally, glycosyltransferase required for the synthesis of succinoglycan (EPS I). Needed for the addition of the sixth sugar (glucose), catalyzes the formation of a beta-1,6 linkage between the fifth and sixth sugar. The chain is Succinoglycan biosynthesis protein ExoU (exoU) from Rhizobium meliloti (strain 1021) (Ensifer meliloti).